Consider the following 626-residue polypeptide: DNA mismatch repair protein MutL (626 aa).

This sequence belongs to the DNA mismatch repair MutL/HexB family.

Functionally, this protein is involved in the repair of mismatches in DNA. It is required for dam-dependent methyl-directed DNA mismatch repair. May act as a 'molecular matchmaker', a protein that promotes the formation of a stable complex between two or more DNA-binding proteins in an ATP-dependent manner without itself being part of a final effector complex. This is DNA mismatch repair protein MutL from Cellvibrio japonicus (strain Ueda107) (Pseudomonas fluorescens subsp. cellulosa).